A 78-amino-acid chain; its full sequence is uncharacterized protein (78 aa).

This protein may be involved in virus assembly. Essential for virus function. This is an uncharacterized protein from Sulfolobus spindle-shape virus 1 (SSV1).